Consider the following 305-residue polypeptide: Tetraspanin-12 (305 aa).

Residues 1–12 (MAREDSVRCLRC) are Cytoplasmic-facing. Residues Cys-9 and Cys-12 are each lipidated (S-palmitoyl cysteine). Residues 13-33 (LLYALNLLFWLMSISVLGVSA) traverse the membrane as a helical segment. The Extracellular segment spans residues 34–59 (WIRDYLNNVLTLTAETRVEEAVILTY). A helical membrane pass occupies residues 60–80 (FPVVHPVMIAVCCFLILVGML). The Cytoplasmic segment spans residues 81–89 (GYCGTVKRN). Cys-83 carries the S-palmitoyl cysteine lipid modification. The chain crosses the membrane as a helical span at residues 90 to 110 (LLLLVWYFGSLLVIFCVELAC). At 111-224 (GVWTYEQEIT…RGTKQLQVLR (114 aa)) the chain is on the extracellular side. Residues 225–245 (FLGISIGVTQILAMILTITLL) form a helical membrane-spanning segment. Topologically, residues 246–305 (WALYYDRRDPGADQIMSLKNDTSQQLSCHSVELLKPSLTGIFEHTSMANSFNTHFEMEEL) are cytoplasmic.

It belongs to the tetraspanin (TM4SF) family. Component of a complex, at least composed of TSPAN12, FZD4 and norrin (NDP). Palmitoylated; required for interaction with ADAM10. The precise position of palmitoylated residues is unclear and occurs either on Cys-9, Cys-12 and/or Cys-83.

It localises to the cell membrane. In terms of biological role, regulator of cell surface receptor signal transduction. Plays a central role in retinal vascularization by regulating norrin (NDP) signal transduction. Acts in concert with norrin (NDP) to promote FZD4 multimerization and subsequent activation of FZD4, leading to promote accumulation of beta-catenin (CTNNB1) and stimulate LEF/TCF-mediated transcriptional programs. Suprisingly, it only activates the norrin (NDP)-dependent activation of FZD4, while it does not activate the Wnt-dependent activation of FZD4, suggesting the existence of a Wnt-independent signaling that also promote accumulation the beta-catenin (CTNNB1). The chain is Tetraspanin-12 (TSPAN12) from Gallus gallus (Chicken).